A 577-amino-acid polypeptide reads, in one-letter code: MFS-type transporter CPUR_05422 (577 aa).

The interval 1–49 is disordered; the sequence is MSAMSAMGKPEHGSATTSDLEHRATESSLEKQDVEAAPPGPVKPVDPSP. Basic and acidic residues predominate over residues 19 to 34; sequence DLEHRATESSLEKQDV. The span at 38–47 shows a compositional bias: pro residues; sequence PPGPVKPVDP. 14 helical membrane passes run 52–72, 93–113, 123–143, 157–177, 184–204, 212–232, 249–269, 285–305, 326–346, 359–379, 383–403, 416–436, 449–469, and 525–545; these read STLK…LVAV, DVGW…LLFG, VVLL…GAAP, VGSA…IPLA, GLMG…GGAF, WCFY…FFYF, ILSL…CLLL, IIVL…VQIC, FLTT…IPIW, GIQL…GGLL, IGYY…GAGL, VIGY…TPNL, MGIA…VAVG, and VFIV…CMEW. Residues 554-577 form a disordered region; that stretch reads PPAGPPAGAPTESAPVETKAAGHT.

The protein belongs to the major facilitator superfamily. TCR/Tet family.

It localises to the membrane. Functionally, MFS-type transporter; part of the ergochrome gene cluster responsible for the typical purple-black color of the ergot sclerotia. The ergochrome gene cluster produces several ergot pigments including the yellow ergochrome secalonic acid and its derivatives, as well as the red anthraquinones endocrocin and clavorubin. The polypeptide is MFS-type transporter CPUR_05422 (Claviceps purpurea (strain 20.1) (Ergot fungus)).